The following is a 125-amino-acid chain: Ribonuclease P protein component (125 aa).

It belongs to the RnpA family. As to quaternary structure, consists of a catalytic RNA component (M1 or rnpB) and a protein subunit.

The catalysed reaction is Endonucleolytic cleavage of RNA, removing 5'-extranucleotides from tRNA precursor.. Its function is as follows. RNaseP catalyzes the removal of the 5'-leader sequence from pre-tRNA to produce the mature 5'-terminus. It can also cleave other RNA substrates such as 4.5S RNA. The protein component plays an auxiliary but essential role in vivo by binding to the 5'-leader sequence and broadening the substrate specificity of the ribozyme. The polypeptide is Ribonuclease P protein component (Idiomarina loihiensis (strain ATCC BAA-735 / DSM 15497 / L2-TR)).